We begin with the raw amino-acid sequence, 398 residues long: Succinate--CoA ligase [ADP-forming] subunit beta (398 aa).

One can recognise an ATP-grasp domain in the interval 9 to 254 (KRLLHTYGAP…LTEEDPKEIE (246 aa)). Residues lysine 46, 53–55 (GRG), glutamate 109, alanine 112, and glutamate 117 contribute to the ATP site. Asparagine 209 and aspartate 223 together coordinate Mg(2+). Substrate is bound by residues asparagine 274 and 331–333 (GIM).

It belongs to the succinate/malate CoA ligase beta subunit family. In terms of assembly, heterotetramer of two alpha and two beta subunits. Requires Mg(2+) as cofactor.

The catalysed reaction is succinate + ATP + CoA = succinyl-CoA + ADP + phosphate. It carries out the reaction GTP + succinate + CoA = succinyl-CoA + GDP + phosphate. Its pathway is carbohydrate metabolism; tricarboxylic acid cycle; succinate from succinyl-CoA (ligase route): step 1/1. In terms of biological role, succinyl-CoA synthetase functions in the citric acid cycle (TCA), coupling the hydrolysis of succinyl-CoA to the synthesis of either ATP or GTP and thus represents the only step of substrate-level phosphorylation in the TCA. The beta subunit provides nucleotide specificity of the enzyme and binds the substrate succinate, while the binding sites for coenzyme A and phosphate are found in the alpha subunit. The sequence is that of Succinate--CoA ligase [ADP-forming] subunit beta from Brucella abortus (strain S19).